The primary structure comprises 201 residues: UPF0323 lipoprotein Cj0371 (201 aa).

The first 26 residues, 1–26 (MKKIKKIIQIGMIGGLAAVAGGALAG), serve as a signal peptide directing secretion. C27 is lipidated: N-palmitoyl cysteine. C27 carries the S-diacylglycerol cysteine lipid modification. The disordered stretch occupies residues 169–201 (NKAGTTSSASSAKKSGFFGGGSKATSSSSSFGS). Composition is skewed to low complexity over residues 170 to 184 (KAGT…KKSG) and 191 to 201 (KATSSSSSFGS).

The protein belongs to the UPF0323 family.

The protein localises to the cell membrane. This chain is UPF0323 lipoprotein Cj0371, found in Campylobacter jejuni subsp. jejuni serotype O:2 (strain ATCC 700819 / NCTC 11168).